The chain runs to 696 residues: UvrABC system protein C (696 aa).

Positions 16–95 (TEPGVYKFRD…IKRFDPRFNV (80 aa)) constitute a GIY-YIG domain. The region spanning 208 to 243 (DKVTRKLNADMMAAAEELDFERAARLRDDLEAIDKV) is the UVR domain.

It belongs to the UvrC family. As to quaternary structure, interacts with UvrB in an incision complex.

The protein localises to the cytoplasm. Functionally, the UvrABC repair system catalyzes the recognition and processing of DNA lesions. UvrC both incises the 5' and 3' sides of the lesion. The N-terminal half is responsible for the 3' incision and the C-terminal half is responsible for the 5' incision. The protein is UvrABC system protein C of Corynebacterium glutamicum (strain ATCC 13032 / DSM 20300 / JCM 1318 / BCRC 11384 / CCUG 27702 / LMG 3730 / NBRC 12168 / NCIMB 10025 / NRRL B-2784 / 534).